Here is a 218-residue protein sequence, read N- to C-terminus: GTP cyclohydrolase 1 (218 aa).

Positions 109, 112, and 180 each coordinate Zn(2+).

It belongs to the GTP cyclohydrolase I family. Toroid-shaped homodecamer, composed of two pentamers of five dimers.

The catalysed reaction is GTP + H2O = 7,8-dihydroneopterin 3'-triphosphate + formate + H(+). The protein operates within cofactor biosynthesis; 7,8-dihydroneopterin triphosphate biosynthesis; 7,8-dihydroneopterin triphosphate from GTP: step 1/1. This chain is GTP cyclohydrolase 1, found in Haemophilus ducreyi (strain 35000HP / ATCC 700724).